Consider the following 85-residue polypeptide: MPKLEMMLLVLLILPLCYIDAVGPPPPWNMEDEIIEHWQKLHCHEISDLTPWILCSPEPLCGGKGCCAQEVCDCSGPVCTCPPCL.

A signal peptide spans 1-21 (MPKLEMMLLVLLILPLCYIDA). The propeptide occupies 22–40 (VGPPPPWNMEDEIIEHWQK).

Belongs to the conotoxin D superfamily. Post-translationally, contains 5 disulfide bonds. As to expression, expressed by the venom duct.

Its subcellular location is the secreted. Its function is as follows. Probable neurotoxin. The sequence is that of Conotoxin Im28.1 from Conus imperialis (Imperial cone).